Consider the following 619-residue polypeptide: Chaperone protein HscA homolog (619 aa).

The protein belongs to the heat shock protein 70 family.

Its function is as follows. Chaperone involved in the maturation of iron-sulfur cluster-containing proteins. Has a low intrinsic ATPase activity which is markedly stimulated by HscB. This Shewanella amazonensis (strain ATCC BAA-1098 / SB2B) protein is Chaperone protein HscA homolog.